The following is a 459-amino-acid chain: Cobyrinate a,c-diamide synthase (459 aa).

The 195-residue stretch at 252 to 446 (TLALADDEAF…LHVHFAQRPE (195 aa)) folds into the GATase cobBQ-type domain. Residue Cys-334 is the Nucleophile of the active site.

This sequence belongs to the CobB/CbiA family. In terms of assembly, monomer. The cofactor is Mg(2+).

The enzyme catalyses cob(II)yrinate + 2 L-glutamine + 2 ATP + 2 H2O = cob(II)yrinate a,c diamide + 2 L-glutamate + 2 ADP + 2 phosphate + 2 H(+). It functions in the pathway cofactor biosynthesis; adenosylcobalamin biosynthesis; cob(II)yrinate a,c-diamide from sirohydrochlorin (anaerobic route): step 10/10. Its function is as follows. Catalyzes the ATP-dependent amidation of the two carboxylate groups at positions a and c of cobyrinate, using either L-glutamine or ammonia as the nitrogen source. Is able to use other nucleotide triphosphates as substrate, such as GTP or UTP, although less efficiently than ATP. The sequence is that of Cobyrinate a,c-diamide synthase from Salmonella typhimurium (strain LT2 / SGSC1412 / ATCC 700720).